The following is a 115-amino-acid chain: Nitrogen regulatory protein P-II 1 (115 aa).

An O-UMP-tyrosine modification is found at Y54.

Belongs to the P(II) protein family.

Functionally, could be involved in the regulation of nitrogen fixation. The sequence is that of Nitrogen regulatory protein P-II 1 from Methanothermobacter thermautotrophicus (strain ATCC 29096 / DSM 1053 / JCM 10044 / NBRC 100330 / Delta H) (Methanobacterium thermoautotrophicum).